The chain runs to 623 residues: Glutathione import ATP-binding protein GsiA (623 aa).

ABC transporter domains lie at 18 to 272 and 317 to 567; these read VRNL…QGLL and LQVS…RKLM. Residues 52–59 and 360–367 contribute to the ATP site; these read GESGSGKS and GESGCGKS.

Belongs to the ABC transporter superfamily. Glutathione importer (TC 3.A.1.5.11) family. The complex is composed of two ATP-binding proteins (GsiA), two transmembrane proteins (GsiC and GsiD) and a solute-binding protein (GsiB).

The protein resides in the cell inner membrane. The enzyme catalyses glutathione(out) + ATP + H2O = glutathione(in) + ADP + phosphate + H(+). Its function is as follows. Part of the ABC transporter complex GsiABCD involved in glutathione import. Responsible for energy coupling to the transport system. The sequence is that of Glutathione import ATP-binding protein GsiA from Pectobacterium atrosepticum (strain SCRI 1043 / ATCC BAA-672) (Erwinia carotovora subsp. atroseptica).